The following is a 631-amino-acid chain: Phosphomethylpyrimidine synthase (631 aa).

Residues N239, M268, Y297, H333, 353-355, 394-397, and E433 each bind substrate; these read SRG and DGLR. A Zn(2+)-binding site is contributed by H437. Y460 serves as a coordination point for substrate. Residue H501 participates in Zn(2+) binding. Positions 581, 584, and 589 each coordinate [4Fe-4S] cluster.

Belongs to the ThiC family. In terms of assembly, homodimer. Requires [4Fe-4S] cluster as cofactor.

It carries out the reaction 5-amino-1-(5-phospho-beta-D-ribosyl)imidazole + S-adenosyl-L-methionine = 4-amino-2-methyl-5-(phosphooxymethyl)pyrimidine + CO + 5'-deoxyadenosine + formate + L-methionine + 3 H(+). The protein operates within cofactor biosynthesis; thiamine diphosphate biosynthesis. Its function is as follows. Catalyzes the synthesis of the hydroxymethylpyrimidine phosphate (HMP-P) moiety of thiamine from aminoimidazole ribotide (AIR) in a radical S-adenosyl-L-methionine (SAM)-dependent reaction. The protein is Phosphomethylpyrimidine synthase of Salmonella paratyphi B (strain ATCC BAA-1250 / SPB7).